A 342-amino-acid chain; its full sequence is Protein-glutamate methylesterase/protein-glutamine glutaminase 1 (342 aa).

In terms of domain architecture, Response regulatory spans 2-119; sequence RVAIVNDMPL…GDPKAAAQRL (118 aa). Asp-53 carries the post-translational modification 4-aspartylphosphate. Positions 146-329 constitute a CheB-type methylesterase domain; the sequence is SDTDAALVVI…LPLGDIAPRL (184 aa). Catalysis depends on residues Ser-158, His-185, and Asp-278.

It belongs to the CheB family. In terms of processing, phosphorylated by CheA. Phosphorylation of the N-terminal regulatory domain activates the methylesterase activity.

The protein resides in the cytoplasm. It catalyses the reaction [protein]-L-glutamate 5-O-methyl ester + H2O = L-glutamyl-[protein] + methanol + H(+). The catalysed reaction is L-glutaminyl-[protein] + H2O = L-glutamyl-[protein] + NH4(+). Its function is as follows. Involved in chemotaxis. Part of a chemotaxis signal transduction system that modulates chemotaxis in response to various stimuli. Catalyzes the demethylation of specific methylglutamate residues introduced into the chemoreceptors (methyl-accepting chemotaxis proteins or MCP) by CheR. Also mediates the irreversible deamidation of specific glutamine residues to glutamic acid. The sequence is that of Protein-glutamate methylesterase/protein-glutamine glutaminase 1 from Bordetella avium (strain 197N).